Consider the following 361-residue polypeptide: Chorismate synthase (361 aa).

NADP(+) contacts are provided by arginine 48 and arginine 54. FMN-binding positions include 125-127 (RSS), 238-239 (NA), glycine 278, 293-297 (KPTSS), and arginine 319.

Belongs to the chorismate synthase family. Homotetramer. Requires FMNH2 as cofactor.

The catalysed reaction is 5-O-(1-carboxyvinyl)-3-phosphoshikimate = chorismate + phosphate. It participates in metabolic intermediate biosynthesis; chorismate biosynthesis; chorismate from D-erythrose 4-phosphate and phosphoenolpyruvate: step 7/7. Its function is as follows. Catalyzes the anti-1,4-elimination of the C-3 phosphate and the C-6 proR hydrogen from 5-enolpyruvylshikimate-3-phosphate (EPSP) to yield chorismate, which is the branch point compound that serves as the starting substrate for the three terminal pathways of aromatic amino acid biosynthesis. This reaction introduces a second double bond into the aromatic ring system. This is Chorismate synthase from Salmonella choleraesuis (strain SC-B67).